We begin with the raw amino-acid sequence, 426 residues long: Glutamyl-tRNA(Gln) amidotransferase subunit D (426 aa).

The Asparaginase/glutaminase domain maps to 82-413 (KNISILSTGG…KDAKKLICKN (332 aa)). Catalysis depends on residues Thr-92, Thr-168, Asp-169, and Lys-245.

The protein belongs to the asparaginase 1 family. GatD subfamily. As to quaternary structure, heterodimer of GatD and GatE.

It catalyses the reaction L-glutamyl-tRNA(Gln) + L-glutamine + ATP + H2O = L-glutaminyl-tRNA(Gln) + L-glutamate + ADP + phosphate + H(+). Its function is as follows. Allows the formation of correctly charged Gln-tRNA(Gln) through the transamidation of misacylated Glu-tRNA(Gln) in organisms which lack glutaminyl-tRNA synthetase. The reaction takes place in the presence of glutamine and ATP through an activated gamma-phospho-Glu-tRNA(Gln). The GatDE system is specific for glutamate and does not act on aspartate. This Methanococcus vannielii (strain ATCC 35089 / DSM 1224 / JCM 13029 / OCM 148 / SB) protein is Glutamyl-tRNA(Gln) amidotransferase subunit D.